The sequence spans 308 residues: Ribosomal RNA small subunit methyltransferase H (308 aa).

S-adenosyl-L-methionine contacts are provided by residues 34–36 (GGH), aspartate 54, phenylalanine 80, aspartate 101, and glutamine 108.

The protein belongs to the methyltransferase superfamily. RsmH family.

It localises to the cytoplasm. The enzyme catalyses cytidine(1402) in 16S rRNA + S-adenosyl-L-methionine = N(4)-methylcytidine(1402) in 16S rRNA + S-adenosyl-L-homocysteine + H(+). Its function is as follows. Specifically methylates the N4 position of cytidine in position 1402 (C1402) of 16S rRNA. In Ureaplasma urealyticum serovar 10 (strain ATCC 33699 / Western), this protein is Ribosomal RNA small subunit methyltransferase H.